The chain runs to 254 residues: Ubiquinone/menaquinone biosynthesis C-methyltransferase UbiE (254 aa).

S-adenosyl-L-methionine contacts are provided by residues Thr-77, Asp-98, 126–127 (NA), and Ser-143.

This sequence belongs to the class I-like SAM-binding methyltransferase superfamily. MenG/UbiE family.

It catalyses the reaction a 2-demethylmenaquinol + S-adenosyl-L-methionine = a menaquinol + S-adenosyl-L-homocysteine + H(+). The catalysed reaction is a 2-methoxy-6-(all-trans-polyprenyl)benzene-1,4-diol + S-adenosyl-L-methionine = a 5-methoxy-2-methyl-3-(all-trans-polyprenyl)benzene-1,4-diol + S-adenosyl-L-homocysteine + H(+). It functions in the pathway quinol/quinone metabolism; menaquinone biosynthesis; menaquinol from 1,4-dihydroxy-2-naphthoate: step 2/2. It participates in cofactor biosynthesis; ubiquinone biosynthesis. Methyltransferase required for the conversion of demethylmenaquinol (DMKH2) to menaquinol (MKH2) and the conversion of 2-polyprenyl-6-methoxy-1,4-benzoquinol (DDMQH2) to 2-polyprenyl-3-methyl-6-methoxy-1,4-benzoquinol (DMQH2). The chain is Ubiquinone/menaquinone biosynthesis C-methyltransferase UbiE from Hydrogenovibrio crunogenus (strain DSM 25203 / XCL-2) (Thiomicrospira crunogena).